The sequence spans 578 residues: Maltogenic alpha-amylase (578 aa).

It belongs to the glycosyl hydrolase 13 family.

The enzyme catalyses hydrolysis of (1-&gt;4)-alpha-D-glucosidic linkages in polysaccharides so as to remove successive alpha-maltose residues from the non-reducing ends of the chains.. Its function is as follows. Converts starch into maltose. In contrary to other maltogenic alpha-amylases BlmA cannot hydrolyze 1,4-alpha-glucosidic linkage next to 1,6-alpha-glucosidic linkages. The polypeptide is Maltogenic alpha-amylase (blmA) (Bacillus licheniformis).